The following is a 466-amino-acid chain: Ribosome biogenesis protein YTM1 (466 aa).

Positions 8–95 (IKINFFTNEE…EASLNLEYTR (88 aa)) are ubiquitin-like (UBL) domain. Positions 105–466 (SFNNDDWISS…QINKGSDITK (362 aa)) are sufficient for interaction with ERB1 and association with 66S pre-ribosomes. 7 WD repeats span residues 120–159 (PLSA…EKQY), 161–199 (GHSG…NIED), 214–253 (GHKA…MTTI), 291–331 (GHSQ…CVDT), 333–372 (TTGY…TTTE), 381–421 (GHTN…SLYT), and 431–466 (KGQD…DITK).

The protein belongs to the WD repeat WDR12/YTM1 family. Component of the NOP7 complex, composed of ERB1, NOP7 and YTM1. The complex is held together by ERB1, which interacts with NOP7 via its N-terminal domain and with YTM1 via a high-affinity interaction between the seven-bladed beta-propeller domains of the 2 proteins. The NOP7 complex associates with the 66S pre-ribosome. Interacts (via UBL domain) with MDN1 (via VWFA/MIDAS domain).

The protein resides in the nucleus. The protein localises to the nucleolus. Its subcellular location is the nucleoplasm. Component of the NOP7 complex, which is required for maturation of the 25S and 5.8S ribosomal RNAs and formation of the 60S ribosome. This Debaryomyces hansenii (strain ATCC 36239 / CBS 767 / BCRC 21394 / JCM 1990 / NBRC 0083 / IGC 2968) (Yeast) protein is Ribosome biogenesis protein YTM1.